Here is a 446-residue protein sequence, read N- to C-terminus: Phosphoglucosamine mutase (446 aa).

Ser102 serves as the catalytic Phosphoserine intermediate. Mg(2+) contacts are provided by Ser102, Asp241, Asp243, and Asp245. Ser102 is subject to Phosphoserine.

The protein belongs to the phosphohexose mutase family. Requires Mg(2+) as cofactor. In terms of processing, activated by phosphorylation.

The catalysed reaction is alpha-D-glucosamine 1-phosphate = D-glucosamine 6-phosphate. Its function is as follows. Catalyzes the conversion of glucosamine-6-phosphate to glucosamine-1-phosphate. The sequence is that of Phosphoglucosamine mutase from Xylella fastidiosa (strain M23).